Here is a 118-residue protein sequence, read N- to C-terminus: Large ribosomal subunit protein uL18 (118 aa).

The protein belongs to the universal ribosomal protein uL18 family. Part of the 50S ribosomal subunit; part of the 5S rRNA/L5/L18/L25 subcomplex. Contacts the 5S and 23S rRNAs.

Functionally, this is one of the proteins that bind and probably mediate the attachment of the 5S RNA into the large ribosomal subunit, where it forms part of the central protuberance. The chain is Large ribosomal subunit protein uL18 from Campylobacter concisus (strain 13826).